A 134-amino-acid polypeptide reads, in one-letter code: TSC22 domain family protein 3 (134 aa).

The tract at residues 1 to 60 is AP1-binding; it reads MNTEMYQTPMEVAVYQLHNFSISFFSSLLGGDVVSVKLDNSASGASVVALDNKIEQAMDL. The leucine-zipper stretch occupies residues 76–97; that stretch reads LKEQIRELVEKNSQLERENTLL. Residues 101–134 are disordered; sequence ASPEQLEKFQSRLSPEEPAPEAPETPEAPGGSAV. Ser-102 bears the Phosphoserine mark. Thr-125 bears the Phosphothreonine mark. Low complexity predominate over residues 125-134; it reads TPEAPGGSAV.

This sequence belongs to the TSC-22/Dip/Bun family. As to quaternary structure, can form homodimers, however it is likely to function as a monomer. Interacts with NFKB1. Interacts (via N-terminus) with JUN and FOS; these interactions inhibit the binding of active AP1 to its target DNA. Interacts with MYOD1. Interacts with HDAC1; this interaction affects HDAC1 activity on MYOG promoter and thus inhibits MYOD1 transcriptional activity.

It localises to the cytoplasm. The protein resides in the nucleus. In terms of biological role, protects T-cells from IL2 deprivation-induced apoptosis through the inhibition of FOXO3A transcriptional activity that leads to the down-regulation of the pro-apoptotic factor BCL2L11. In macrophages, plays a role in the anti-inflammatory and immunosuppressive effects of glucocorticoids and IL10. In T-cells, inhibits anti-CD3-induced NFKB1 nuclear translocation and thereby NFKB1 DNA-binding activities. In vitro, suppresses AP-1 transcription factor complex DNA-binding activities. The chain is TSC22 domain family protein 3 (Tsc22d3) from Rattus norvegicus (Rat).